The chain runs to 271 residues: 4-hydroxy-tetrahydrodipicolinate reductase (271 aa).

NAD(+) is bound at residue glycine 8–methionine 13. Arginine 35 is an NADP(+) binding site. NAD(+) contacts are provided by residues glycine 100–threonine 102 and alanine 124–methionine 127. The Proton donor/acceptor role is filled by histidine 157. Histidine 158 contributes to the (S)-2,3,4,5-tetrahydrodipicolinate binding site. Lysine 161 functions as the Proton donor in the catalytic mechanism. Glycine 167–threonine 168 is a (S)-2,3,4,5-tetrahydrodipicolinate binding site.

The protein belongs to the DapB family.

The protein resides in the cytoplasm. It catalyses the reaction (S)-2,3,4,5-tetrahydrodipicolinate + NAD(+) + H2O = (2S,4S)-4-hydroxy-2,3,4,5-tetrahydrodipicolinate + NADH + H(+). The enzyme catalyses (S)-2,3,4,5-tetrahydrodipicolinate + NADP(+) + H2O = (2S,4S)-4-hydroxy-2,3,4,5-tetrahydrodipicolinate + NADPH + H(+). It functions in the pathway amino-acid biosynthesis; L-lysine biosynthesis via DAP pathway; (S)-tetrahydrodipicolinate from L-aspartate: step 4/4. Functionally, catalyzes the conversion of 4-hydroxy-tetrahydrodipicolinate (HTPA) to tetrahydrodipicolinate. This is 4-hydroxy-tetrahydrodipicolinate reductase from Myxococcus xanthus (strain DK1622).